Here is a 931-residue protein sequence, read N- to C-terminus: Isoleucine--tRNA ligase (931 aa).

The segment covering 1–14 (MDYSKTLNLPQTQF) has biased composition (polar residues). Residues 1–25 (MDYSKTLNLPQTQFPMRGNLPQREP) are disordered. The 'HIGH' region signature appears at 57-67 (PYANGHIHLGH). Position 559 (E559) interacts with L-isoleucyl-5'-AMP. A 'KMSKS' region motif is present at residues 600-604 (KMSKS). K603 provides a ligand contact to ATP. Positions 898, 901, 918, and 921 each coordinate Zn(2+).

Belongs to the class-I aminoacyl-tRNA synthetase family. IleS type 1 subfamily. Monomer. Zn(2+) is required as a cofactor.

It localises to the cytoplasm. The catalysed reaction is tRNA(Ile) + L-isoleucine + ATP = L-isoleucyl-tRNA(Ile) + AMP + diphosphate. In terms of biological role, catalyzes the attachment of isoleucine to tRNA(Ile). As IleRS can inadvertently accommodate and process structurally similar amino acids such as valine, to avoid such errors it has two additional distinct tRNA(Ile)-dependent editing activities. One activity is designated as 'pretransfer' editing and involves the hydrolysis of activated Val-AMP. The other activity is designated 'posttransfer' editing and involves deacylation of mischarged Val-tRNA(Ile). In Desulforamulus reducens (strain ATCC BAA-1160 / DSM 100696 / MI-1) (Desulfotomaculum reducens), this protein is Isoleucine--tRNA ligase.